A 500-amino-acid polypeptide reads, in one-letter code: NAD(P)H-quinone oxidoreductase chain 4, chloroplastic (500 aa).

The next 14 helical transmembrane spans lie at 4–24 (FPWL…IFFL), 35–55 (YTMG…CYHF), 87–107 (IGPI…AWPV), 113–130 (LFHF…GLFS), 134–154 (LLLF…LLSM), 167–187 (FILY…GMGL), 208–228 (GLEI…LPII), 242–262 (HYST…YGLI), 274–294 (SIFS…AALT), 305–325 (IAYS…SLTN), 330–350 (GAIL…FLGG), 386–406 (LALP…GIIT), 416–436 (IIIT…LLSM), and 463–483 (FVSI…DLVI).

The protein belongs to the complex I subunit 4 family.

It is found in the plastid. The protein localises to the chloroplast thylakoid membrane. The enzyme catalyses a plastoquinone + NADH + (n+1) H(+)(in) = a plastoquinol + NAD(+) + n H(+)(out). It carries out the reaction a plastoquinone + NADPH + (n+1) H(+)(in) = a plastoquinol + NADP(+) + n H(+)(out). The chain is NAD(P)H-quinone oxidoreductase chain 4, chloroplastic from Lemna minor (Common duckweed).